We begin with the raw amino-acid sequence, 130 residues long: Small ribosomal subunit protein uS9 (130 aa).

This sequence belongs to the universal ribosomal protein uS9 family.

The polypeptide is Small ribosomal subunit protein uS9 (Polaromonas sp. (strain JS666 / ATCC BAA-500)).